The sequence spans 281 residues: D-arabinitol 2-dehydrogenase [ribulose-forming] (281 aa).

NADP(+)-binding residues include Leu31 and Asn52. Catalysis depends on Ser169, which acts as the Proton donor. NADP(+) contacts are provided by Tyr184, Lys188, Ile217, and Thr219. Tyr184 (proton acceptor) is an active-site residue. Lys188 functions as the Lowers pKa of active site Tyr in the catalytic mechanism.

It belongs to the short-chain dehydrogenases/reductases (SDR) family.

It catalyses the reaction D-arabinitol + NAD(+) = D-ribulose + NADH + H(+). The protein operates within carbohydrate metabolism; D-arabinitol metabolism. This is D-arabinitol 2-dehydrogenase [ribulose-forming] (ARD1) from Candida albicans (strain WO-1) (Yeast).